Consider the following 505-residue polypeptide: Peroxisome proliferator-activated receptor gamma (505 aa).

Threonine 84 is a glycosylation site (O-linked (GlcNAc) threonine). Phosphoserine; by MAPK is present on serine 112. Positions 136-210 (AIECRVCGDK…VGMSHNAIRF (75 aa)) form a DNA-binding region, nuclear receptor. NR C4-type zinc fingers lie at residues 139–159 (CRVCGDKASGFHYGVHACEGC) and 176–198 (CDLNCRIHKKSRNKCQYCRFQKC). The tract at residues 205–280 (HNAIRFGRMP…DKSPFVIYDM (76 aa)) is interaction with FAM120B. One can recognise an NR LBD domain in the interval 238 to 503 (DLRALAKHLY…HPLLQEIYKD (266 aa)). A Glycyl lysine isopeptide (Lys-Gly) (interchain with G-Cter in ubiquitin) cross-link involves residue lysine 252. The 9aaTAD signature appears at 495-503 (PLLQEIYKD).

It belongs to the nuclear hormone receptor family. NR1 subfamily. As to quaternary structure, interacts with FOXO1 (acetylated form). Heterodimer with other nuclear receptors, such as RXRA. The heterodimer with the retinoic acid receptor RXRA is called adipocyte-specific transcription factor ARF6. Interacts with NCOA6 coactivator, leading to a strong increase in transcription of target genes. Interacts with coactivator PPARBP, leading to a mild increase in transcription of target genes. Interacts with NOCA7 in a ligand-inducible manner. Interacts with NCOA1 and NCOA2 LXXLL motifs. Interacts with ASXL1, ASXL2, DNTTIP2, FAM120B, MAP2K1/MEK1, NR0B2, PDPK1, PRDM16, PRMT2 and TGFB1I1. Interacts (when activated by agonist) with PPP5C. Interacts with HELZ2 and THRAP3; the interaction stimulates the transcriptional activity of PPARG. Interacts with PER2, the interaction is ligand dependent and blocks PPARG recruitment to target promoters. Interacts with NOCT. Interacts with ACTN4. Interacts (when in the liganded conformation) with GPS2. Interacts with CRY1 and CRY2 in a ligand-dependent manner. In the absence of hormonal ligand, interacts with TACC1. In macrophages, interacts with PAQR3 and STUB1; the interactions promote PPARG poylubiquitination and STUB1-mediated degradation. In terms of processing, O-GlcNAcylation at Thr-84 reduces transcriptional activity in adipocytes. Phosphorylated at basal conditions and dephosphorylated when treated with the ligand. May be dephosphorylated by PPP5C. The phosphorylated form may be inactive and dephosphorylation induces adipogenic activity. Post-translationally, ubiquitinated by E3 ubiquitin-protein ligase complex containing FBXO9; leading to proteasomal degradation. Ubiquitinated at Lys-252 by TRIM55 leading to proteasomal degradation. Ubiquitinated by E3 ubiquitin-protein ligase STUB1/CHIP; leading to proteasomal degradation. Highest expression in adipose tissue. Lower in liver, heart, kidney, stomach, duodenum and colon.

The protein resides in the nucleus. It localises to the cytoplasm. PDPK1 activates its transcriptional activity independently of its kinase activity. Nuclear receptor that binds peroxisome proliferators such as hypolipidemic drugs and fatty acids. Once activated by a ligand, the nuclear receptor binds to DNA specific PPAR response elements (PPRE) and modulates the transcription of its target genes, such as acyl-CoA oxidase. It therefore controls the peroxisomal beta-oxidation pathway of fatty acids. Key regulator of adipocyte differentiation and glucose homeostasis. ARF6 acts as a key regulator of the tissue-specific adipocyte P2 (aP2) enhancer. Acts as a critical regulator of gut homeostasis by suppressing NF-kappa-B-mediated pro-inflammatory responses. Plays a role in the regulation of cardiovascular circadian rhythms by regulating the transcription of BMAL1 in the blood vessels. In Macaca mulatta (Rhesus macaque), this protein is Peroxisome proliferator-activated receptor gamma (PPARG).